We begin with the raw amino-acid sequence, 399 residues long: Elongation factor Tu (399 aa).

In terms of domain architecture, tr-type G spans 10 to 204 (KPHVNIGTIG…AVDASIPEPE (195 aa)). The tract at residues 19-26 (GHVDHGKT) is G1. Residue 19 to 26 (GHVDHGKT) participates in GTP binding. Thr-26 serves as a coordination point for Mg(2+). Residues 60–64 (GITIN) form a G2 region. Residues 81-84 (DCPG) are G3. GTP contacts are provided by residues 81 to 85 (DCPGH) and 136 to 139 (NKCD). The G4 stretch occupies residues 136 to 139 (NKCD). The G5 stretch occupies residues 174–176 (SGL).

Belongs to the TRAFAC class translation factor GTPase superfamily. Classic translation factor GTPase family. EF-Tu/EF-1A subfamily. As to quaternary structure, monomer.

It is found in the cytoplasm. It carries out the reaction GTP + H2O = GDP + phosphate + H(+). Its function is as follows. GTP hydrolase that promotes the GTP-dependent binding of aminoacyl-tRNA to the A-site of ribosomes during protein biosynthesis. This Prochlorococcus marinus (strain NATL1A) protein is Elongation factor Tu.